Reading from the N-terminus, the 367-residue chain is Pectate lyase 1 (367 aa).

The N-terminal stretch at 1–21 is a signal peptide; sequence MASPCLIAVLVFLCAIVSCYS. Cysteines 28 and 45 form a disulfide. The interval 38 to 305 is beta-helix; that stretch reads NRMKLADCAV…YKKEVTKRIG (268 aa). Residues 92-104 form an igE-binding. Binds to IgE in 5 out of 7 patients tested region; it reads IFSQNMNIKLKMP. An intrachain disulfide couples C128 to C147. The N-linked (GlcNAc...) asparagine glycan is linked to N148. A Ca(2+)-binding site is contributed by D170. Residue N178 is glycosylated (N-linked (GlcNAc...) asparagine). D194 and D198 together coordinate Ca(2+). Residues 239-250 form an igE-binding. Binds to IgE in 6 out of 7 patients tested region; the sequence is AFNQFGPNAGQR. R250 is an active-site residue. Positions 251-258 are igE-binding. Binds to IgE in 5 out of 7 patients tested; it reads MPRARYGL. A disulfide bridge links C306 with C312. The tract at residues 317–327 is igE-binding. Binds to IgE in 3 out of 7 patients tested; it reads WRSTRDAFING.

Belongs to the polysaccharide lyase 1 family. Amb a subfamily. Ca(2+) is required as a cofactor. Post-translationally, N-glycosylated; consists of complex-type N-glycans containing the Lewis a antigen (Galbeta1-3(Fucalpha1-4)GlcNAcbeta1-). As to expression, expressed in pollen (at protein level).

The catalysed reaction is Eliminative cleavage of (1-&gt;4)-alpha-D-galacturonan to give oligosaccharides with 4-deoxy-alpha-D-galact-4-enuronosyl groups at their non-reducing ends.. The protein operates within glycan metabolism; pectin degradation; 2-dehydro-3-deoxy-D-gluconate from pectin: step 2/5. Functionally, has low pectate lyase activity. The protein is Pectate lyase 1 of Juniperus ashei (Ozark white cedar).